The primary structure comprises 310 residues: Ribosomal RNA small subunit methyltransferase H (310 aa).

Residues Gly32–His34, Asp52, Phe79, Asp100, and Gln107 each bind S-adenosyl-L-methionine.

Belongs to the methyltransferase superfamily. RsmH family.

It localises to the cytoplasm. It carries out the reaction cytidine(1402) in 16S rRNA + S-adenosyl-L-methionine = N(4)-methylcytidine(1402) in 16S rRNA + S-adenosyl-L-homocysteine + H(+). In terms of biological role, specifically methylates the N4 position of cytidine in position 1402 (C1402) of 16S rRNA. This chain is Ribosomal RNA small subunit methyltransferase H, found in Bacillus cereus (strain ATCC 10987 / NRS 248).